The primary structure comprises 485 residues: Adenosylhomocysteinase 1 (485 aa).

The substrate site is built by T64, D139, and E205. 206–208 is an NAD(+) binding site; the sequence is TTT. Substrate-binding residues include K235 and D239. NAD(+) contacts are provided by residues 271-276, E292, 348-350, N397, H404, K479, 479-483, and Y483; these read GDVGKG, IGH, and KPPHY.

This sequence belongs to the adenosylhomocysteinase family. Homotetramer. The cofactor is NAD(+).

The enzyme catalyses S-adenosyl-L-homocysteine + H2O = L-homocysteine + adenosine. It functions in the pathway amino-acid biosynthesis; L-homocysteine biosynthesis; L-homocysteine from S-adenosyl-L-homocysteine: step 1/1. In terms of biological role, essential protein during embryogenesis. Adenosylhomocysteine is a competitive inhibitor of S-adenosyl-L-methionine-dependent methyl transferase reactions; therefore adenosylhomocysteinase may play a key role in the control of methylations via regulation of the intracellular concentration of adenosylhomocysteine. Required for DNA methylation-dependent gene silencing. The protein is Adenosylhomocysteinase 1 of Arabidopsis thaliana (Mouse-ear cress).